Consider the following 395-residue polypeptide: Flap endonuclease 1 (395 aa).

Residues 1–104 are N-domain; that stretch reads MGIKHLYQVI…GELAKRFMRK (104 aa). D34 lines the Mg(2+) pocket. Positions 47 and 70 each coordinate DNA. Mg(2+) is bound by residues D86, E158, E160, D179, and D181. Positions 122–253 are I-domain; sequence DVEKFSRRTV…NTALKLIRDH (132 aa). E158 contributes to the DNA binding site. Positions 231 and 233 each coordinate DNA. Residue D233 participates in Mg(2+) binding. The interaction with PCNA stretch occupies residues 341–349; sequence QQSRLEGFF. Residues 357–389 show a composition bias toward basic and acidic residues; it reads QEKATLKRKHEEKLELQKKKKKEEAKAKKEAKS. Positions 357–395 are disordered; that stretch reads QEKATLKRKHEEKLELQKKKKKEEAKAKKEAKSKPRGAV.

This sequence belongs to the XPG/RAD2 endonuclease family. FEN1 subfamily. As to quaternary structure, interacts with PCNA. Three molecules of FEN1 bind to one PCNA trimer with each molecule binding to one PCNA monomer. PCNA stimulates the nuclease activity without altering cleavage specificity. The cofactor is Mg(2+). In terms of processing, phosphorylated. Phosphorylation upon DNA damage induces relocalization to the nuclear plasma.

It localises to the nucleus. The protein resides in the nucleolus. Its subcellular location is the nucleoplasm. It is found in the mitochondrion. Its function is as follows. Structure-specific nuclease with 5'-flap endonuclease and 5'-3' exonuclease activities involved in DNA replication and repair. During DNA replication, cleaves the 5'-overhanging flap structure that is generated by displacement synthesis when DNA polymerase encounters the 5'-end of a downstream Okazaki fragment. It enters the flap from the 5'-end and then tracks to cleave the flap base, leaving a nick for ligation. Also involved in the long patch base excision repair (LP-BER) pathway, by cleaving within the apurinic/apyrimidinic (AP) site-terminated flap. Acts as a genome stabilization factor that prevents flaps from equilibrating into structures that lead to duplications and deletions. Also possesses 5'-3' exonuclease activity on nicked or gapped double-stranded DNA, and exhibits RNase H activity. Also involved in replication and repair of rDNA and in repairing mitochondrial DNA. In Ajellomyces dermatitidis (strain ER-3 / ATCC MYA-2586) (Blastomyces dermatitidis), this protein is Flap endonuclease 1.